Here is an 820-residue protein sequence, read N- to C-terminus: Leucine--tRNA ligase (820 aa).

The short motif at 42–52 is the 'HIGH' region element; the sequence is PYPSGDLHMGH. The 'KMSKS' region signature appears at 576 to 580; it reads KMSKS. Lys-579 lines the ATP pocket.

Belongs to the class-I aminoacyl-tRNA synthetase family.

The protein localises to the cytoplasm. The catalysed reaction is tRNA(Leu) + L-leucine + ATP = L-leucyl-tRNA(Leu) + AMP + diphosphate. The polypeptide is Leucine--tRNA ligase (Coxiella burnetii (strain Dugway 5J108-111)).